The following is a 191-amino-acid chain: UPF0312 protein Pmen_0419 (191 aa).

The signal sequence occupies residues 1–22 (MLKNALAALVLGSALIGGQAMA).

This sequence belongs to the UPF0312 family. Type 1 subfamily.

The protein resides in the periplasm. The protein is UPF0312 protein Pmen_0419 of Ectopseudomonas mendocina (strain ymp) (Pseudomonas mendocina).